The following is a 217-amino-acid chain: MDVILSTRHHSHLDSLLIETQRVLEVVFGHPVAQRPSPANAFPNPLLSPKDRRHAAGLMRINHVGEICAQGLYFGQVAVARKEELRRHLLKAAQEETDHLSWCSDRLHELESRPSLFNPLWYSSSYMLGVFAGLLGDPWSLGFVVETERQVEAHLEKHLQVLPESDARSREILRVMKVEEARHADQADHAGARLLPSPIPGAMAWAARLMKVVAYRI.

Fe cation contacts are provided by Glu-66, Glu-96, His-99, Glu-148, Glu-180, and His-183.

The protein belongs to the COQ7 family. Fe cation serves as cofactor.

It is found in the cell membrane. The enzyme catalyses a 5-methoxy-2-methyl-3-(all-trans-polyprenyl)benzene-1,4-diol + AH2 + O2 = a 3-demethylubiquinol + A + H2O. It participates in cofactor biosynthesis; ubiquinone biosynthesis. Catalyzes the hydroxylation of 2-nonaprenyl-3-methyl-6-methoxy-1,4-benzoquinol during ubiquinone biosynthesis. This Xylella fastidiosa (strain 9a5c) protein is 3-demethoxyubiquinol 3-hydroxylase.